The sequence spans 514 residues: Beta-galactoside alpha-2,6-sialyltransferase 2 (514 aa).

Residues 1-10 lie on the Cytoplasmic side of the membrane; the sequence is MKSSLKQWRR. Residues 11–31 traverse the membrane as a helical; Signal-anchor for type II membrane protein segment; sequence LALGLILVWALLFLALLSYFM. Topologically, residues 32 to 514 are lumenal; the sequence is ESRVDDPHAA…PGFNKVHCEP (483 aa). Low complexity predominate over residues 70-92; it reads ATSSAPSTSSNTQQEQSQEENPS. Positions 70-183 are disordered; that stretch reads ATSSAPSTSS…TKRVARHGSS (114 aa). Residues 119-132 are compositionally biased toward polar residues; sequence FGTQDVGSRSTGVS. Acidic residues predominate over residues 145 to 166; sequence PQEDEDEEEEVIGGEEEDEEGG. 3 disulfide bridges follow: Cys-246–Cys-512, Cys-289–Cys-441, and Cys-459–Cys-470. 3 N-linked (GlcNAc...) asparagine glycosylation sites follow: Asn-330, Asn-350, and Asn-357.

It belongs to the glycosyltransferase 29 family.

It is found in the golgi apparatus. The protein resides in the golgi stack membrane. It carries out the reaction a beta-D-galactoside + CMP-N-acetyl-beta-neuraminate = an N-acetyl-alpha-neuraminyl-(2-&gt;6)-beta-D-galactosyl derivative + CMP + H(+). Its function is as follows. Transfers sialic acid from the donor of substrate CMP-sialic acid to galactose containing acceptor substrates. The sequence is that of Beta-galactoside alpha-2,6-sialyltransferase 2 (st6gal2) from Danio rerio (Zebrafish).